The chain runs to 132 residues: Small ribosomal subunit protein bS6 (132 aa).

A disordered region spans residues 96–132 (HAEGPSIQMQKRDERERGDRGDRPDRGDRGERGGFRR). The segment covering 105–132 (QKRDERERGDRGDRPDRGDRGERGGFRR) has biased composition (basic and acidic residues).

Belongs to the bacterial ribosomal protein bS6 family.

Functionally, binds together with bS18 to 16S ribosomal RNA. This chain is Small ribosomal subunit protein bS6, found in Cereibacter sphaeroides (strain ATCC 17025 / ATH 2.4.3) (Rhodobacter sphaeroides).